The primary structure comprises 21 residues: Apolipophorin 2 (21 aa).

Expressed in hemolymph.

The protein localises to the secreted. Constitutes the major component of lipophorin, which mediates transport for various types of lipids in hemolymph. Acts by forming lipoprotein particles that bind lipoproteins and lipids. The chain is Apolipophorin 2 from Galleria mellonella (Greater wax moth).